A 232-amino-acid polypeptide reads, in one-letter code: Ribonuclease 3 (232 aa).

An RNase III domain is found at 5 to 134 (QTVLKNHFAI…FLGALLLDKD (130 aa)). Mg(2+) is bound at residue glutamate 47. The active site involves aspartate 51. 2 residues coordinate Mg(2+): aspartate 120 and glutamate 123. Glutamate 123 is a catalytic residue. One can recognise a DRBM domain in the interval 160 to 229 (DYKTHLQELL…AKNAVEKGLD (70 aa)).

The protein belongs to the ribonuclease III family. Homodimer. Mg(2+) is required as a cofactor.

The protein resides in the cytoplasm. It catalyses the reaction Endonucleolytic cleavage to 5'-phosphomonoester.. Digests double-stranded RNA. Involved in the processing of primary rRNA transcript to yield the immediate precursors to the large and small rRNAs (23S and 16S). Processes some mRNAs, and tRNAs when they are encoded in the rRNA operon. Processes pre-crRNA and tracrRNA of type II CRISPR loci if present in the organism. The sequence is that of Ribonuclease 3 from Streptococcus pneumoniae (strain CGSP14).